The following is a 411-amino-acid chain: Zinc metalloproteinase/disintegrin (411 aa).

The first 20 residues, 1 to 20 (MIEVLLVTICLAVFPYQGSS), serve as a signal peptide directing secretion. Positions 21-190 (IILESGNVND…KASQLYLTPE (170 aa)) are excised as a propeptide. Residues 197 to 395 (RYVKLAIVVD…SKPQCILNAP (199 aa)) enclose the Peptidase M12B domain. Aspartate 284 is a binding site for Ca(2+). Intrachain disulfides connect cysteine 308-cysteine 390, cysteine 352-cysteine 374, and cysteine 354-cysteine 357. Residue histidine 333 participates in Zn(2+) binding. Residue glutamate 334 is part of the active site. Zn(2+) is bound by residues histidine 337 and histidine 343. Ca(2+)-binding residues include cysteine 390 and asparagine 393. The propeptide occupies 396–411 (LRTDTVSTPVSGNEPL).

This sequence belongs to the venom metalloproteinase (M12B) family. P-II subfamily. As to quaternary structure, monomer. Zn(2+) serves as cofactor. As to expression, expressed by the venom gland.

Its subcellular location is the secreted. Snake venom metalloproteinase that impairs hemostasis in the envenomed animal. The sequence is that of Zinc metalloproteinase/disintegrin from Protobothrops mucrosquamatus (Taiwan habu).